A 239-amino-acid polypeptide reads, in one-letter code: Probable fimbrial chaperone YehC (239 aa).

Residues 1 to 31 form the signal peptide; it reads MAAIPWRPFNLRGIKMKGLLSLLIFSMVLPA.

The protein belongs to the periplasmic pilus chaperone family.

The protein resides in the periplasm. Part of the yehABCD fimbrial operon. Could contribute to adhesion to various surfaces in specific environmental niches. This Escherichia coli (strain K12) protein is Probable fimbrial chaperone YehC (yehC).